Consider the following 356-residue polypeptide: Guanine nucleotide-binding protein alpha-2 subunit (356 aa).

Residues M1–Q25 form a disordered region. A lipid anchor (N-myristoyl glycine) is attached at G2. C4 carries the S-palmitoyl cysteine lipid modification. The segment covering E7–Q25 has biased composition (basic and acidic residues). The 325-residue stretch at Q14–L338 folds into the G-alpha domain. Residues R17–D30 form a G1 motif region. Residues Q25, Q27, S28, N29, D30, V135, E160, A166, V188, E254, S255, C257, and F310 each coordinate GTP. Mg(2+) is bound at residue N29. The interval F158–A166 is G2 motif. A Mg(2+)-binding site is contributed by A166. The interval R181–V190 is G3 motif. Positions M250–C257 are G4 motif. The segment at Q308–L313 is G5 motif.

This sequence belongs to the G-alpha family. G(q) subfamily. G proteins are composed of 3 units; alpha, beta and gamma. The alpha chain contains the guanine nucleotide binding site. Mg(2+) is required as a cofactor.

In terms of biological role, guanine nucleotide-binding proteins (G proteins) are involved as modulators or transducers in various transmembrane signaling systems. Involved in behavioral responses to P.aeruginosa by controlling the expression of daf-7, a member of the TGF-beta family, in ASJ sensory neurons. The polypeptide is Guanine nucleotide-binding protein alpha-2 subunit (gpa-2) (Caenorhabditis briggsae).